Here is a 500-residue protein sequence, read N- to C-terminus: Cytochrome P450 2D3 (500 aa).

Cys-446 serves as a coordination point for heme.

Belongs to the cytochrome P450 family. Requires heme as cofactor.

The protein resides in the endoplasmic reticulum membrane. It is found in the microsome membrane. The catalysed reaction is an organic molecule + reduced [NADPH--hemoprotein reductase] + O2 = an alcohol + oxidized [NADPH--hemoprotein reductase] + H2O + H(+). Cytochromes P450 are a group of heme-thiolate monooxygenases. In liver microsomes, this enzyme is involved in an NADPH-dependent electron transport pathway. It oxidizes a variety of structurally unrelated compounds, including steroids, fatty acids, and xenobiotics. The sequence is that of Cytochrome P450 2D3 (Cyp2d3) from Rattus norvegicus (Rat).